Reading from the N-terminus, the 82-residue chain is uncharacterized protein (82 aa).

This sequence belongs to the chlamydial CPn_0710/CT_666/TC_0037 family.

This is an uncharacterized protein from Chlamydia muridarum (strain MoPn / Nigg).